The primary structure comprises 473 residues: Ribulose bisphosphate carboxylase large chain 2 (473 aa).

Residues Asn116 and Thr166 each contribute to the substrate site. Lys168 (proton acceptor) is an active-site residue. A substrate-binding site is contributed by Lys170. Residues Lys194, Asp196, and Glu197 each contribute to the Mg(2+) site. Residue Lys194 is modified to N6-carboxylysine. The active-site Proton acceptor is the His287. The substrate site is built by Arg288, His320, and Ser372.

Belongs to the RuBisCO large chain family. Type I subfamily. Heterohexadecamer of 8 large chains and 8 small chains. The cofactor is Mg(2+).

It catalyses the reaction 2 (2R)-3-phosphoglycerate + 2 H(+) = D-ribulose 1,5-bisphosphate + CO2 + H2O. The catalysed reaction is D-ribulose 1,5-bisphosphate + O2 = 2-phosphoglycolate + (2R)-3-phosphoglycerate + 2 H(+). Its function is as follows. RuBisCO catalyzes two reactions: the carboxylation of D-ribulose 1,5-bisphosphate, the primary event in carbon dioxide fixation, as well as the oxidative fragmentation of the pentose substrate. Both reactions occur simultaneously and in competition at the same active site. This chain is Ribulose bisphosphate carboxylase large chain 2, found in Acidithiobacillus ferrooxidans (Thiobacillus ferrooxidans).